Reading from the N-terminus, the 390-residue chain is MRSMKPPGFSSDLMDEHSVDLLNGSILAAENPSKREVAQDVPGFERKPTKVRKPRVKWTEKETNDLLRGCQIHGVGNWKKILLDERFHFTNRSPNDLKDRFRTILPEDYKKFYPNAKTHMGRPQKIPHTVGLSKSTRKERKQFTPEEDERLLEGFFLHGPCWTRISKDANLGLQNRRSTDLRDRFRNAFPERYAAAGFKLKNNPGNRSKYYQNNMVNDATTPNDSSTTEAAAAAVAAVAAVAASNPNASPQQTTEQPASDELLDWPHHNLPSQFFTSQRNPNYSTDSFLLGQSLSDPFNHTLQSFHPYESLFSAGQPPSLPISPSTSQNSVQPFPFSIQQPPLHLEPPLSSNTLNSSTLPQPNSTDFNTFPPLPSTPRISSEDIPWDNRG.

The interval 30–57 is disordered; sequence ENPSKREVAQDVPGFERKPTKVRKPRVK. A compositionally biased stretch (basic and acidic residues) spans 32-48; that stretch reads PSKREVAQDVPGFERKP. HTH myb-type domains follow at residues 50–109 and 135–193; these read KVRK…PEDY and STRK…PERY. The H-T-H motif DNA-binding region spans 78 to 105; sequence WKKILLDERFHFTNRSPNDLKDRFRTIL. The disordered stretch occupies residues 115-143; that stretch reads NAKTHMGRPQKIPHTVGLSKSTRKERKQF. Positions 162–189 form a DNA-binding region, H-T-H motif; sequence WTRISKDANLGLQNRRSTDLRDRFRNAF. 2 stretches are compositionally biased toward polar residues: residues 244–257 and 322–340; these read SNPN…TEQP and ISPS…SIQQ. 2 disordered regions span residues 244–278 and 316–390; these read SNPN…FTSQ and QPPS…DNRG. The segment covering 347-360 has biased composition (low complexity); it reads PPLSSNTLNSSTLP.

The protein localises to the nucleus. In terms of biological role, general transcription factor with prominent roles in controlling histone levels and stability. Binds and regulates the activities of many promoters, including those controlling the expression of all four types of canonical histones. Is also involved in the centromeric loading of cnp1 and maintenance of centromere identity. Moreover, regulates the expression of cdc2, a protease capable of histone clipping. The polypeptide is Telobox protein 1 (Schizosaccharomyces pombe (strain 972 / ATCC 24843) (Fission yeast)).